The chain runs to 268 residues: Imidazole glycerol phosphate synthase subunit HisF (268 aa).

Active-site residues include D12 and D131.

The protein belongs to the HisA/HisF family. In terms of assembly, heterodimer of HisH and HisF.

It is found in the cytoplasm. It carries out the reaction 5-[(5-phospho-1-deoxy-D-ribulos-1-ylimino)methylamino]-1-(5-phospho-beta-D-ribosyl)imidazole-4-carboxamide + L-glutamine = D-erythro-1-(imidazol-4-yl)glycerol 3-phosphate + 5-amino-1-(5-phospho-beta-D-ribosyl)imidazole-4-carboxamide + L-glutamate + H(+). It participates in amino-acid biosynthesis; L-histidine biosynthesis; L-histidine from 5-phospho-alpha-D-ribose 1-diphosphate: step 5/9. In terms of biological role, IGPS catalyzes the conversion of PRFAR and glutamine to IGP, AICAR and glutamate. The HisF subunit catalyzes the cyclization activity that produces IGP and AICAR from PRFAR using the ammonia provided by the HisH subunit. The sequence is that of Imidazole glycerol phosphate synthase subunit HisF from Methanocorpusculum labreanum (strain ATCC 43576 / DSM 4855 / Z).